The primary structure comprises 693 residues: Polyribonucleotide nucleotidyltransferase (693 aa).

Mg(2+)-binding residues include D489 and D495. The KH domain occupies 556–615 (PQIHVMNINPAKIKDVVGRGGATVKGIVEKTGAQIDTSDSGEVKVFAKDKKSMDMAVAMI). The 69-residue stretch at 625–693 (GQVYKGKIVK…GRVKLSLVAR (69 aa)) folds into the S1 motif domain.

Belongs to the polyribonucleotide nucleotidyltransferase family. In terms of assembly, component of the RNA degradosome, which is a multiprotein complex involved in RNA processing and mRNA degradation. It depends on Mg(2+) as a cofactor.

It localises to the cytoplasm. It carries out the reaction RNA(n+1) + phosphate = RNA(n) + a ribonucleoside 5'-diphosphate. In terms of biological role, involved in mRNA degradation. Catalyzes the phosphorolysis of single-stranded polyribonucleotides processively in the 3'- to 5'-direction. The chain is Polyribonucleotide nucleotidyltransferase from Francisella tularensis subsp. holarctica (strain OSU18).